The primary structure comprises 1783 residues: Trans-splicing factor Raa3, chloroplastic (1783 aa).

Residues 1–40 (MKADLATAKGSSPAFSAPRTYRARLLSRCLNKCFNTVLVS) constitute a chloroplast transit peptide. 8 disordered regions span residues 97–378 (ATTH…VGVN), 420–484 (ATSA…VAAQ), 563–610 (ARVG…SATK), 652–709 (STEP…SPAA), 918–971 (AAPT…QRAS), 1395–1427 (RDAK…QQHQ), 1476–1506 (PAPA…RRSR), and 1620–1639 (VKGR…DVQG). Over residues 105 to 118 (DSGGQGPAAAGGRG) the composition is skewed to gly residues. 3 stretches are compositionally biased toward low complexity: residues 126-157 (QAAA…PQRP), 186-205 (AVDA…PAPA), and 224-242 (AGKP…VGPQ). The segment covering 256–273 (DESHMGLTHRDQGHDERI) has biased composition (basic and acidic residues). Low complexity predominate over residues 277-289 (AGEAWKAGAVAAP). Residues 307–316 (LASSALGTHS) show a composition bias toward polar residues. Low complexity-rich tracts occupy residues 343-374 (SGSS…ITSN), 420-436 (ATSA…SSSS), 577-599 (RPVQ…SQPG), 655-669 (PLAA…ASAS), 676-709 (SSSN…SPAA), 928-970 (SAAA…PQRA), and 1403-1417 (QSAA…AAQD). Composition is skewed to basic residues over residues 1494 to 1506 (KSRR…RRSR) and 1620 to 1630 (VKGRGRGRRTA). In terms of domain architecture, RAP spans 1713–1772 (LAVGAAAGGAVIRNSRWLLSGAGALRRRLLTHAGWLVVPVRERQWKDLRSAEQQRRVVRE).

As to quaternary structure, part of a 1700 kDa complex that includes the precursor RNA to exon 1 and the tscA RNA.

The protein resides in the plastid. It localises to the chloroplast stroma. In terms of biological role, required for trans-splicing of exons 1 and 2 of the chloroplast encoded psaA mRNA (a group II intron). May be required for stability of the chloroplast RNA-protein complex in which it is found. The polypeptide is Trans-splicing factor Raa3, chloroplastic (RAA3) (Chlamydomonas reinhardtii (Chlamydomonas smithii)).